Consider the following 434-residue polypeptide: Asparagine--tRNA ligase (434 aa).

It belongs to the class-II aminoacyl-tRNA synthetase family.

The protein localises to the cytoplasm. The catalysed reaction is tRNA(Asn) + L-asparagine + ATP = L-asparaginyl-tRNA(Asn) + AMP + diphosphate + H(+). The protein is Asparagine--tRNA ligase of Pyrococcus abyssi (strain GE5 / Orsay).